We begin with the raw amino-acid sequence, 232 residues long: tRNA (guanine-N(1)-)-methyltransferase (232 aa).

Residues G112 and 132-137 (IGDYVL) contribute to the S-adenosyl-L-methionine site.

The protein belongs to the RNA methyltransferase TrmD family. As to quaternary structure, homodimer.

The protein resides in the cytoplasm. The catalysed reaction is guanosine(37) in tRNA + S-adenosyl-L-methionine = N(1)-methylguanosine(37) in tRNA + S-adenosyl-L-homocysteine + H(+). Its function is as follows. Specifically methylates guanosine-37 in various tRNAs. The protein is tRNA (guanine-N(1)-)-methyltransferase of Anaplasma phagocytophilum (strain HZ).